The sequence spans 757 residues: RNA-directed RNA polymerase catalytic subunit (757 aa).

Residues 50–82 form a disordered region; the sequence is SEKGKWTTNTETGAPQLNPIDGPLPEDNEPSGY. Over residues 55-64 the composition is skewed to polar residues; that stretch reads WTTNTETGAP. 2 consecutive short sequence motifs (nuclear localization signal) follow at residues 187–195 and 203–216; these read RKRRVRDNM and RTIGKKKQRLNKRS. Residues 249–256 are promoter-binding site; sequence RGFVYFVE. Residues 286 to 483 form the RdRp catalytic domain; sequence VRKMMTNSQD…GINMSKKKSY (198 aa).

Belongs to the influenza viruses polymerase PB1 family. In terms of assembly, influenza RNA polymerase is composed of three subunits: PB1, PB2 and PA. Interacts (via N-terminus) with PA (via C-terminus). Interacts (via C-terminus) with PB2 (via N-terminus); this interaction is essential for transcription initiation. In terms of processing, phosphorylated by host PRKCA.

It localises to the host nucleus. Its subcellular location is the host cytoplasm. The catalysed reaction is RNA(n) + a ribonucleoside 5'-triphosphate = RNA(n+1) + diphosphate. Functionally, RNA-dependent RNA polymerase which is responsible for replication and transcription of virus RNA segments. The transcription of viral mRNAs occurs by a unique mechanism called cap-snatching. 5' methylated caps of cellular mRNAs are cleaved after 10-13 nucleotides by PA. In turn, these short capped RNAs are used as primers by PB1 for transcription of viral mRNAs. During virus replication, PB1 initiates RNA synthesis and copy vRNA into complementary RNA (cRNA) which in turn serves as a template for the production of more vRNAs. The polypeptide is RNA-directed RNA polymerase catalytic subunit (Influenza A virus (strain A/Turkey/Minnesota/501/1978 H6N8)).